The primary structure comprises 493 residues: MASTVRPSFSLGNETLKVPLALFALNRQRLCERLRKNGAVQAASAVVLQGGEEMQRYCTDTSIIFRQESFFHWAFGVVESGCYGVIDVDTGKSTLFVPRLPDSYATWMGKIHSKEYFKEKYAVDDVQYTDEIASVLTSRNPSVLLTLRGVNTDSGSVCREASFEGISKFNVNNTILHPEIVECRVFKTDMELEVLRYTNRISSEAHREVMKAVKVGMKEYEMESLFQHYCYSRGGMRHTSYTCICCSGENAAVLHYGHAGAPNDRTIKDGDICLFDMGGEYYCFASDITCSFPANGKFTEDQKAIYEAVLRSCRTVMSTMKPGVWWPDMHRLADRIHLEELARIGLLSGSVDAMLQVHLGAVFMPHGLGHFLGLDVHDVGGYPEGVERIDEPGLRSLRTARHLEPGMVLTVEPGIYFIDHLLDQALADPAQACFFNQEVLQRFRNFGGVRIEEDVVVTDSGMELLTCVPRTVEEIEACMAGCDKASVPFSGQK.

At alanine 2 the chain carries N-acetylalanine. Position 167 is a phosphoserine (serine 167). Histidine 255 serves as a coordination point for a dipeptide. 3 residues coordinate Mn(2+): aspartate 276, aspartate 287, and histidine 370. Aspartate 287 provides a ligand contact to a dipeptide. A dipeptide is bound by residues histidine 377 and arginine 398. Glutamate 412 and glutamate 452 together coordinate Mn(2+).

This sequence belongs to the peptidase M24B family. Eukaryotic-type prolidase subfamily. Homodimer. The cofactor is Mn(2+).

The enzyme catalyses Xaa-L-Pro dipeptide + H2O = an L-alpha-amino acid + L-proline. In terms of biological role, dipeptidase that catalyzes the hydrolysis of dipeptides with a prolyl (Xaa-Pro) or hydroxyprolyl residue in the C-terminal position. The preferred dipeptide substrate is Gly-Pro, but other Xaa-Pro dipeptides, such as Ala-Pro, Met-Pro, Phe-Pro, Val-Pro and Leu-Pro, can be cleaved. Plays an important role in collagen metabolism because the high level of iminoacids in collagen. This is Xaa-Pro dipeptidase (Pepd) from Mus musculus (Mouse).